The following is a 550-amino-acid chain: Glucose-6-phosphate isomerase (550 aa).

Glutamate 357 functions as the Proton donor in the catalytic mechanism. Residues histidine 388 and lysine 516 contribute to the active site.

It belongs to the GPI family.

The protein localises to the cytoplasm. The enzyme catalyses alpha-D-glucose 6-phosphate = beta-D-fructose 6-phosphate. The protein operates within carbohydrate biosynthesis; gluconeogenesis. It participates in carbohydrate degradation; glycolysis; D-glyceraldehyde 3-phosphate and glycerone phosphate from D-glucose: step 2/4. Functionally, catalyzes the reversible isomerization of glucose-6-phosphate to fructose-6-phosphate. This chain is Glucose-6-phosphate isomerase, found in Psychromonas ingrahamii (strain DSM 17664 / CCUG 51855 / 37).